The primary structure comprises 266 residues: Integral membrane protein 2B (266 aa).

Residues 1–54 (MVKVTFNSALAQKEAKKDEPKSGEEALIIPPDAVAVDCKDPDDVVPVGQRRAWC) are Cytoplasmic-facing. Residues 55 to 75 (WCMCFGLAFMLAGVILGGAYL) traverse the membrane as a helical; Signal-anchor for type II membrane protein segment. At 76–266 (YKYFALQPDD…KFAVETLICS (191 aa)) the chain is on the lumenal side. The necessary for interaction with APP and inhibitor effects on APP processing stretch occupies residues 102–134 (EPSADAPAALYQTIEENIKIFEEEEVEFISVPV). The region spanning 137–231 (FADSDPANIV…LCHDKETYKL (95 aa)) is the BRICHOS domain. Disulfide bonds link cysteine 164/cysteine 223 and cysteine 248/cysteine 265. A glycan (N-linked (GlcNAc...) asparagine) is linked at asparagine 170.

Belongs to the ITM2 family. Homodimer; disulfide-linked. Interacts with SPPL2A and SPPL2B. Interacts with APP. Mature BRI2 (mBRI2) interacts with the APP amyloid-beta A4 protein; the interaction occurs at the cell surface and in the endocytic compartments and enable alpha- and beta-secretase-induced APP cleavage inhibition. Mature BRI2 (mBRI2) interacts with the APP C99; the interaction occurs in the endocytic compartments and enable gamma-secretase-induced C99 cleavage inhibition. May form heterodimers with Bri23 peptide and APP amyloid-beta protein 40. Interacts with ADAM7 in sperm; the interaction increases following capacitation. The ectodomain C-terminal part of the imBRI2 is processed by furin producing a secreted Bri23 peptide and a mature BRI2, membrane form (mBRI2). The remaining part of the ectodomain of mBRI2 containing the BRICHOS domain is cleaved by ADAM10 and is secreted (BRI2C, soluble form). The membrane-bound N-terminal fragment (BRI2C, membrane form) is further proteolytically processed by SPPL2A and SPPL2B through regulated intramembrane proteolysis producing a secreted C-peptide and a BRI2 intracellular domain (BRI2 ICD) released in the cytosol. Shedding by ADAM10 facilitates intramembrane cleavage but is not absolutely required for BRI2 ICD generation. Post-translationally, glycosylation at Asn-170 is important for cell surface localization, but doesn't affect furin- and ADAM10-induced proteolytic processing. As to expression, ubiquitous. Expressed in brain.

It is found in the golgi apparatus membrane. The protein resides in the cell membrane. Its subcellular location is the endosome membrane. It localises to the secreted. Functionally, plays a regulatory role in the processing of the amyloid-beta A4 precursor protein (APP) and acts as an inhibitor of the amyloid-beta peptide aggregation and fibrils deposition. Plays a role in the induction of neurite outgrowth. Functions as a protease inhibitor by blocking access of secretases to APP cleavage sites. Its function is as follows. Mature BRI2 (mBRI2) functions as a modulator of the amyloid-beta A4 precursor protein (APP) processing leading to a strong reduction in the secretion of secretase-processed amyloid-beta protein 40 and amyloid-beta protein 42. Bri23 peptide prevents aggregation of APP amyloid-beta protein 42 into toxic oligomers. The protein is Integral membrane protein 2B (ITM2B) of Homo sapiens (Human).